A 431-amino-acid chain; its full sequence is Glutamate-1-semialdehyde 2,1-aminomutase (431 aa).

N6-(pyridoxal phosphate)lysine is present on lysine 269.

This sequence belongs to the class-III pyridoxal-phosphate-dependent aminotransferase family. HemL subfamily. As to quaternary structure, homodimer. Pyridoxal 5'-phosphate is required as a cofactor.

It is found in the cytoplasm. It carries out the reaction (S)-4-amino-5-oxopentanoate = 5-aminolevulinate. Its pathway is porphyrin-containing compound metabolism; protoporphyrin-IX biosynthesis; 5-aminolevulinate from L-glutamyl-tRNA(Glu): step 2/2. The polypeptide is Glutamate-1-semialdehyde 2,1-aminomutase (Francisella tularensis subsp. holarctica (strain LVS)).